We begin with the raw amino-acid sequence, 637 residues long: Chaperone protein HtpG (637 aa).

An a; substrate-binding region spans residues 1–345; that stretch reads MTAAQKETLG…SNDLPLNVSR (345 aa). The b stretch occupies residues 346–562; that stretch reads EILQDNKVTQ…DNDMSSQMQK (217 aa). The segment at 563–637 is c; sequence LMESVGQAAP…LNKLMLELSK (75 aa).

It belongs to the heat shock protein 90 family. In terms of assembly, homodimer.

It localises to the cytoplasm. In terms of biological role, molecular chaperone. Has ATPase activity. In Pseudoalteromonas translucida (strain TAC 125), this protein is Chaperone protein HtpG.